A 692-amino-acid chain; its full sequence is Threonine--tRNA ligase (692 aa).

Residues 2 to 59 (AEAHISITVNGEAKEVEASQTGVELFADDKNIIAVRLNGELRDLYTPLHDGDNVESVT) enclose the TGS domain. The interval 255–561 (DHRKLGQEMD…LLEHYAGAFP (307 aa)) is catalytic. Residues cysteine 360, histidine 411, and histidine 538 each contribute to the Zn(2+) site.

Belongs to the class-II aminoacyl-tRNA synthetase family. In terms of assembly, homodimer. Requires Zn(2+) as cofactor.

It localises to the cytoplasm. The catalysed reaction is tRNA(Thr) + L-threonine + ATP = L-threonyl-tRNA(Thr) + AMP + diphosphate + H(+). Functionally, catalyzes the attachment of threonine to tRNA(Thr) in a two-step reaction: L-threonine is first activated by ATP to form Thr-AMP and then transferred to the acceptor end of tRNA(Thr). Also edits incorrectly charged L-seryl-tRNA(Thr). This chain is Threonine--tRNA ligase, found in Bifidobacterium animalis subsp. lactis (strain AD011).